The chain runs to 234 residues: Endonuclease NucS (234 aa).

Belongs to the NucS endonuclease family.

It localises to the cytoplasm. Functionally, cleaves both 3' and 5' ssDNA extremities of branched DNA structures. In Bifidobacterium adolescentis (strain ATCC 15703 / DSM 20083 / NCTC 11814 / E194a), this protein is Endonuclease NucS.